Here is a 373-residue protein sequence, read N- to C-terminus: Indole glucosinolate O-methyltransferase 3 (373 aa).

Glycine 217, aspartate 240, aspartate 260, methionine 261, and lysine 274 together coordinate S-adenosyl-L-homocysteine. Histidine 278 (proton acceptor) is an active-site residue.

The protein belongs to the class I-like SAM-binding methyltransferase superfamily. Cation-independent O-methyltransferase family.

It functions in the pathway secondary metabolite biosynthesis. Its function is as follows. Involved in indole glucosinolate biosynthesis. Catalyzes methoxylation reactions of the glucosinolate indole ring. Converts the hydroxy intermediates 4-hydroxy-indol-3-yl-methylglucosinolate (4OH-I3M) and 1-hydroxy-indol-3-yl-methylglucosinolate (1OH-I3M) to 4-methoxy-indol-3-yl-methylglucosinolate (4MO-I3M) and 1-methoxy-indol-3-yl-methylglucosinolate(1MO-I3M), respectively. In Arabidopsis thaliana (Mouse-ear cress), this protein is Indole glucosinolate O-methyltransferase 3.